A 506-amino-acid polypeptide reads, in one-letter code: Tetratricopeptide repeat protein 8 (506 aa).

Positions 83 to 112 (RPGTSFARPKTSAKGVNPILRPTTNAGRPL) are disordered. TPR repeat units follow at residues 217–250 (YYWKNQLAKCYLRLGMLQDATKQLQSSLEQKKLI), 251–283 (ETFALLSKAYNRVDQPMAALKTYSAGLEVFPEN), 284–317 (VTMLTGMARVQEALGEYDESVKLYKRVLDAESNN), 319–351 (EAIACVATTYYYGGKPELAMRYYRRILQMGVSS), 353–385 (ELFLNIGLCCMAAQQFDFALSSILRAQSTMTDD), 388–421 (ADVWYNIGQILVDIGDLVSAARSFRIALSHDPDH), 423–455 (ESLVNLGILKHREGKIDEARSLYSSATSKNPYM), and 456–489 (FEGNYNLGLVSFTQGKYHECRELIEKALAAFPEH).

In terms of assembly, part of BBSome complex, that contains at least bbs-1, bbs-2, bbs-4, bbs-5, osm-12, bbs-8/ttc-8 and bbs-9. Expressed in head and tail neurons. Expressed in ciliated male tail-neurons. Expressed in thermosensory and CO(2) sensory AFD neurons.

It localises to the cell projection. It is found in the cilium. Its subcellular location is the cytoplasm. The protein resides in the cytoskeleton. The protein localises to the cilium basal body. It localises to the cilium axoneme. In terms of biological role, component of the BBSome complex. The BBSome complex is thought to function as a coat complex required for sorting of specific membrane proteins to the primary cilia. The BBSome complex is required for ciliogenesis but is dispensable for centriolar satellite function. Required for proper BBSome complex assembly and its ciliary localization. Required for cilia biogenesis and both the assembly and movement of intraflagellar transport proteins along the ciliary axoneme. Plays a role in guanylyl cyclase localization in the ring-like structures at the base of the finger compartment in AFD sensory neurons. The sequence is that of Tetratricopeptide repeat protein 8 from Caenorhabditis elegans.